We begin with the raw amino-acid sequence, 273 residues long: Large ribosomal subunit protein uL2 (273 aa).

Positions 223–273 (VVMNPVDHPMGGGEGRSSGGRHPCTPWGVPTKGHKTRSNKSTDKYIVKRRG) are disordered. Basic and acidic residues predominate over residues 262 to 273 (KSTDKYIVKRRG).

The protein belongs to the universal ribosomal protein uL2 family. In terms of assembly, part of the 50S ribosomal subunit. Forms a bridge to the 30S subunit in the 70S ribosome.

In terms of biological role, one of the primary rRNA binding proteins. Required for association of the 30S and 50S subunits to form the 70S ribosome, for tRNA binding and peptide bond formation. It has been suggested to have peptidyltransferase activity; this is somewhat controversial. Makes several contacts with the 16S rRNA in the 70S ribosome. This is Large ribosomal subunit protein uL2 from Syntrophus aciditrophicus (strain SB).